Reading from the N-terminus, the 348-residue chain is Killer cell immunoglobulin-like receptor 2DL2 (348 aa).

Residues 1–21 (MSLMVVSMACVGFFLLQGAWP) form the signal peptide. The Extracellular portion of the chain corresponds to 22–245 (HEGVHRKPSL…SKTGNPRHLH (224 aa)). Ig-like C2-type domains follow at residues 42–107 (EETV…VTHS) and 142–205 (GESV…FRDS). 2 disulfides stabilise this stretch: Cys-49–Cys-100 and Cys-149–Cys-198. Asn-84, Asn-178, and Asn-211 each carry an N-linked (GlcNAc...) asparagine glycan. The chain crosses the membrane as a helical span at residues 246–264 (ILIGTSVVIILFILLFFLL). Over 265 to 348 (HRWCSNKKNA…ESRSKVVSCP (84 aa)) the chain is Cytoplasmic.

The protein belongs to the immunoglobulin superfamily.

Its subcellular location is the cell membrane. Receptor on natural killer (NK) cells for HLA-Cw1, 3, 7, and 8 allotypes. Inhibits the activity of NK cells thus preventing cell lysis. In Homo sapiens (Human), this protein is Killer cell immunoglobulin-like receptor 2DL2.